A 65-amino-acid polypeptide reads, in one-letter code: Hirudin-3 (65 aa).

Residues 1 to 3 (VVY) form an interaction with thrombin active site region. 3 disulfide bridges follow: C6–C14, C16–C28, and C22–C39. A disordered region spans residues 39-65 (CVTGEGTPKPQSHNDGDFEEIPEEYLQ). A glycan (O-linked (GalNAc...) threonine) is linked at T45. An interaction with fibrinogen-binding exosite of thrombin region spans residues 55 to 65 (DFEEIPEEYLQ). A compositionally biased stretch (acidic residues) spans 55–65 (DFEEIPEEYLQ). Y63 carries the post-translational modification Sulfotyrosine.

It belongs to the protease inhibitor I14 (hirudin) family.

The protein resides in the secreted. In terms of biological role, hirudin is a potent thrombin-specific protease inhibitor. It forms a stable non-covalent complex with alpha-thrombin, thereby abolishing its ability to cleave fibrinogen. The sequence is that of Hirudin-3 from Hirudo medicinalis (Medicinal leech).